We begin with the raw amino-acid sequence, 515 residues long: FADH(2)-dependent monooxygenase TftD (515 aa).

Position 100–104 (100–104) interacts with substrate; it reads RLPDA. FAD is bound by residues 151 to 153, 157 to 160, and threonine 192; these read LNF and QTDR. 203 to 204 lines the substrate pocket; it reads GC. Residue 457–460 coordinates FAD; the sequence is TMTR.

It belongs to the FADH(2)-utilizing monooxygenase family. As to quaternary structure, homotetramer. The chlorophenol-4-monooxygenase is composed of an oxygenase component TftD and a reductase component TftC.

It participates in xenobiotic degradation. In terms of biological role, oxygenase component of a two-component system that degrades 2,4,5-trichlorophenol. Uses FADH(2) supplied by TftC to oxidize 2,4,5-trichlorophenol (2,4,5-TCP) to 2,5-dichloro-p-benzoquinone, which is chemically reduced to 2,5-dichloro-p-hydroquinone (2,5-DiCHQ). Then, TftD oxidizes the latter to 5-chloro-2-hydroxy-p-benzoquinone. The protein is FADH(2)-dependent monooxygenase TftD (tftD) of Burkholderia cepacia (Pseudomonas cepacia).